The chain runs to 616 residues: Chaperone protein HscA (616 aa).

It belongs to the heat shock protein 70 family.

Functionally, chaperone involved in the maturation of iron-sulfur cluster-containing proteins. Has a low intrinsic ATPase activity which is markedly stimulated by HscB. Involved in the maturation of IscU. The polypeptide is Chaperone protein HscA (Edwardsiella ictaluri (strain 93-146)).